A 314-amino-acid polypeptide reads, in one-letter code: Nodulation protein D 1 (314 aa).

Residues 6–63 (LDLNLLVALDALMTERNLTAAARQINLSQPAMSAAIARLRSYFRDELFTMRGRELVPT) enclose the HTH lysR-type domain. Positions 23–42 (LTAAARQINLSQPAMSAAIA) form a DNA-binding region, H-T-H motif.

It belongs to the LysR transcriptional regulatory family.

Functionally, nodD regulates the expression of the nodABCFE genes which encode other nodulation proteins. NodD is also a negative regulator of its own expression. Binds flavonoids as inducers. The sequence is that of Nodulation protein D 1 (nodD1) from Bradyrhizobium elkanii.